Reading from the N-terminus, the 622-residue chain is Low affinity potassium transport system protein Kup (622 aa).

12 consecutive transmembrane segments (helical) span residues 9–29 (LPAVTLAAIGVVYGDIGTSPL), 52–72 (FLSLIFWLLILIVSLKYLLFV), 99–119 (TPVLVIIGLIGGSFFYGEVVI), 137–157 (PSLQEFIVPLSVVVLTLLFFI), 165–185 (VGKLFAPVMLLWFLTLGVLGV), 213–233 (VSFFALGAVVLAITGVEALYA), 247–267 (WFSAVLPSLVLNYFGQGALLL), 276–296 (PFFLLAPDWAMIPLLILATLA), 337–357 (IYIPFINWLLYIAVVLVIVSF), 363–383 (LAAAYGIAVTGTMVLTSILSC), 394–414 (LLIVSVLLLALLCLDVSMFAA), and 419–439 (IFSGGWLPLLLGFLMFIAMIT).

Belongs to the HAK/KUP transporter (TC 2.A.72) family.

It localises to the cell inner membrane. It catalyses the reaction K(+)(in) + H(+)(in) = K(+)(out) + H(+)(out). In terms of biological role, responsible for the low-affinity transport of potassium into the cell. Likely operates as a K(+):H(+) symporter. The sequence is that of Low affinity potassium transport system protein Kup from Sodalis glossinidius (strain morsitans).